The sequence spans 827 residues: WD repeat-containing protein 27 (827 aa).

14 WD repeats span residues 3–57 (NPQD…IWNT), 62–101 (HQLLILRGHHQPITAMAFGNKVNPLLICSASLDYVIMWNL), 112–151 (LVPRGTVMGSLLGKVLCLQLSLDDHVVAVCAGNKIFMLDI), 155–194 (AVRAELQGHLGPVTAVEFCPWRAGTLISASEDRGFKVWDH), 201–237 (YSSSVLSAYPLLSLFIDAESRQLVTGCADGQLWIFSL), 292–337 (FPVL…LANL), 344–387 (YYKD…VLEI), 502–542 (KPGP…VFDA), 546–584 (GTPAVFSGHDGAVNAVCWSQDRRWLLSAARDGTLRMWSA), 590–629 (ALLLGKDMFSKPIQSAQFYYIDAFILLSSGPEFQLLRYHI), 646–687 (KLIC…VFDL), 698–740 (EAHS…LWDL), 746–784 (ERHFEGHPTRGYPCGIAFSPCGRFAACGAEDRHAYVYEM), and 788–826 (TFSHRLAGHTDTVTGVAFNPSAPQLATATLDGKLQLFLA).

The protein is WD repeat-containing protein 27 (WDR27) of Homo sapiens (Human).